A 529-amino-acid chain; its full sequence is ATP synthase subunit alpha (529 aa).

Residue 173-180 participates in ATP binding; that stretch reads GDRQTGKT.

The protein belongs to the ATPase alpha/beta chains family. F-type ATPases have 2 components, CF(1) - the catalytic core - and CF(0) - the membrane proton channel. CF(1) has five subunits: alpha(3), beta(3), gamma(1), delta(1), epsilon(1). CF(0) has three main subunits: a(1), b(2) and c(9-12). The alpha and beta chains form an alternating ring which encloses part of the gamma chain. CF(1) is attached to CF(0) by a central stalk formed by the gamma and epsilon chains, while a peripheral stalk is formed by the delta and b chains.

The protein resides in the cell membrane. It carries out the reaction ATP + H2O + 4 H(+)(in) = ADP + phosphate + 5 H(+)(out). In terms of biological role, produces ATP from ADP in the presence of a proton gradient across the membrane. The alpha chain is a regulatory subunit. The polypeptide is ATP synthase subunit alpha (Streptomyces avermitilis (strain ATCC 31267 / DSM 46492 / JCM 5070 / NBRC 14893 / NCIMB 12804 / NRRL 8165 / MA-4680)).